The primary structure comprises 294 residues: Nucleophosmin (294 aa).

Position 1 is an N-acetylmethionine (Met1). Residues 1–117 (MEDSMDMDMS…PVHISGQHLV (117 aa)) are necessary for interaction with APEX1. The segment at 1-187 (MEDSMDMDMS…DDDDDFDEEV (187 aa)) is required for interaction with SENP3. Phosphoserine; by PLK1 and PLK2 is present on Ser4. Ser10 bears the Phosphoserine mark. Lys32 is modified (N6-acetyllysine; alternate). A Glycyl lysine isopeptide (Lys-Gly) (interchain with G-Cter in SUMO1); alternate cross-link involves residue Lys32. Lys32 participates in a covalent cross-link: Glycyl lysine isopeptide (Lys-Gly) (interchain with G-Cter in SUMO2); alternate. Phosphoserine is present on Ser43. A Phosphotyrosine modification is found at Tyr67. Phosphoserine is present on Ser70. Phosphothreonine is present on residues Thr75 and Thr95. Over residues 121-132 (EDAESEEEEEEE) the composition is skewed to acidic residues. The segment at 121–249 (EDAESEEEEE…GPSSVEDIKA (129 aa)) is disordered. At Ser125 the chain carries Phosphoserine; by CDK2. Ser137 and Ser139 each carry phosphoserine. A Glycyl lysine isopeptide (Lys-Gly) (interchain with G-Cter in SUMO2) cross-link involves residue Lys141. The residue at position 150 (Lys150) is an N6-acetyllysine; alternate. Lys150 participates in a covalent cross-link: Glycyl lysine isopeptide (Lys-Gly) (interchain with G-Cter in SUMO2); alternate. The short motif at 152–157 (PQKKVK) is the Nuclear localization signal element. Residue Lys154 is modified to N6-acetyllysine. Acidic residues predominate over residues 161-188 (DEDEDDDDDDDDDDDEDDDDDDFDEEVE). The interval 188–216 (EEKAPVKKSVRDTPAKNAQKSNQNGKDSK) is interaction with NOP2. A compositionally biased stretch (basic and acidic residues) spans 189–201 (EKAPVKKSVRDTP). A Nuclear localization signal motif is present at residues 192–198 (PVKKSVR). Thr200 carries the post-translational modification Phosphothreonine; by CDK1 and CDK2. Residues 203–222 (KNAQKSNQNGKDSKPSTPRS) show a composition bias toward polar residues. ADP-ribosylserine is present on Ser208. An N6-acetyllysine modification is found at Lys213. Residue Lys216 forms a Glycyl lysine isopeptide (Lys-Gly) (interchain with G-Cter in SUMO2) linkage. A Phosphothreonine; by CDK1 modification is found at Thr219. Basic and acidic residues predominate over residues 223–235 (KGQESFKKQEKTP). Ser227 is modified (phosphoserine). At Lys229 the chain carries N6-acetyllysine. At Lys230 the chain carries N6-acetyllysine; alternate. Lys230 participates in a covalent cross-link: Glycyl lysine isopeptide (Lys-Gly) (interchain with G-Cter in SUMO); alternate. 2 positions are modified to phosphothreonine: Thr234 and Thr237. Phosphoserine occurs at positions 242 and 243. Residues 243 to 294 (SVEDIKAKMQASIEKGGSLPKVEAKFINYVKNCFRMTDQEAIQDLWQWRKSL) are required for nucleolar localization. Lys248 participates in a covalent cross-link: Glycyl lysine isopeptide (Lys-Gly) (interchain with G-Cter in SUMO1); alternate. Glycyl lysine isopeptide (Lys-Gly) (interchain with G-Cter in SUMO2); alternate cross-links involve residues Lys248 and Lys250. Lys250 bears the N6-acetyllysine; alternate mark. At Ser254 the chain carries Phosphoserine. Lys257 carries the post-translational modification N6-acetyllysine; alternate. Residue Lys257 forms a Glycyl lysine isopeptide (Lys-Gly) (interchain with G-Cter in SUMO1); alternate linkage. Lys257 is covalently cross-linked (Glycyl lysine isopeptide (Lys-Gly) (interchain with G-Cter in SUMO2); alternate). Ser260 is subject to Phosphoserine. Residues Lys263, Lys267, and Lys273 each participate in a glycyl lysine isopeptide (Lys-Gly) (interchain with G-Cter in SUMO2); alternate cross-link. Lys263 is covalently cross-linked (Glycyl lysine isopeptide (Lys-Gly) (interchain with G-Cter in SUMO); alternate). N6-acetyllysine; alternate is present on residues Lys267 and Lys273. Residue Lys267 forms a Glycyl lysine isopeptide (Lys-Gly) (interchain with G-Cter in SUMO1); alternate linkage. N6-succinyllysine; alternate is present on Lys267. Thr279 carries the phosphothreonine modification. Lys292 carries the N6-acetyllysine modification.

This sequence belongs to the nucleoplasmin family. In terms of assembly, decamer formed by two pentameric rings associated in a head-to-head fashion. Disulfide-linked dimers under certain conditions. The SWAP complex consists of NPM1, NCL, PARP1 and SWAP70. Interacts with NSUN2 and SENP3. Interacts with the methylated form of RPS10. Interacts (via N-terminal domain) with APEX1; the interaction is RNA-dependent and decreases in hydrogen peroxide-damaged cells. Interacts with isoform 1 of NEK2. Interacts with ROCK2 and BRCA2. Interacts with RPGR. Interacts with CENPW. Interacts with EIF2AK2/PKR. Interacts with CEBPA (isoform 4). Interacts with DDX31; this interaction prevents interaction between NPM1 and HDM2. Interacts with MYC; competitive with NOP53. Interacts with NOP53; the interaction is direct and competitive with MYC. Interacts with LRRC34. Interacts with RRP1B. Interacts with NPM3. Interacts with ALKBH2. Interacts with TTF1 (via C-terminal region). Interacts with NOP2. Interacts with ARID3C (via REKLES DOMAIN); the interaction mediates ARID3C nuclear shuttling. Post-translationally, acetylated at C-terminal lysine residues, thereby increasing affinity to histones. ADP-ribosylated. In terms of processing, phosphorylated at Ser-4 by PLK1 and PLK2. Phosphorylation at Ser-4 by PLK2 in S phase is required for centriole duplication and is sufficient to trigger centriole replication. Phosphorylation at Ser-4 by PLK1 takes place during mitosis. Phosphorylated by CDK2 at Ser-125 and Thr-200. Phosphorylation at Thr-200 may trigger initiation of centrosome duplication. Phosphorylated by CDK1 at Thr-200, Thr-219, Thr-234 and Thr-237 during cell mitosis. When these four sites are phosphorated, RNA-binding activity seem to be abolished. May be phosphorylated at Ser-70 by NEK2. The Thr-200 phosphorylated form has higher affinity for ROCK2. Post-translationally, sumoylated by ARF. May be ubiquitinated. Ubiquitination leads to proteasomal degradation. Deubiquitinated by USP36.

Its subcellular location is the nucleus. The protein localises to the nucleolus. It localises to the nucleoplasm. It is found in the cytoplasm. The protein resides in the cytoskeleton. Its subcellular location is the microtubule organizing center. The protein localises to the centrosome. Involved in diverse cellular processes such as ribosome biogenesis, centrosome duplication, protein chaperoning, histone assembly, cell proliferation, and regulation of tumor suppressors p53/TP53 and ARF. Binds ribosome presumably to drive ribosome nuclear export. Associated with nucleolar ribonucleoprotein structures and bind single-stranded nucleic acids. Acts as a chaperonin for the core histones H3, H2B and H4. Stimulates APEX1 endonuclease activity on apurinic/apyrimidinic (AP) double-stranded DNA but inhibits APEX1 endonuclease activity on AP single-stranded RNA. May exert a control of APEX1 endonuclease activity within nucleoli devoted to repair AP on rDNA and the removal of oxidized rRNA molecules. In concert with BRCA2, regulates centrosome duplication. Regulates centriole duplication: phosphorylation by PLK2 is able to trigger centriole replication. Negatively regulates the activation of EIF2AK2/PKR and suppresses apoptosis through inhibition of EIF2AK2/PKR autophosphorylation. Antagonizes the inhibitory effect of ATF5 on cell proliferation and relieves ATF5-induced G2/M blockade. In complex with MYC enhances the transcription of MYC target genes. May act as chaperonin or cotransporter in the nucleolar localization of transcription termination factor TTF1. This chain is Nucleophosmin (NPM1), found in Bos taurus (Bovine).